Here is a 312-residue protein sequence, read N- to C-terminus: Copper chaperone for superoxide dismutase, chloroplastic (312 aa).

A chloroplast-targeting transit peptide spans 1–78; the sequence is MVGFLRALTA…AAAAATADLS (78 aa). The region spanning 89 to 152 is the HMA domain; that stretch reads ELMTEFMVDM…TLHQTGRDAR (64 aa). Cys-100, Cys-103, Cys-301, and Cys-303 together coordinate Cu cation.

The protein in the C-terminal section; belongs to the Cu-Zn superoxide dismutase family. It depends on Cu(2+) as a cofactor.

It localises to the plastid. Its subcellular location is the chloroplast. Functionally, copper chaperone for superoxide dismutases (SODs). Binds copper ions and delivers them specifically to SODs. Is required for assistance in SODs disulfide bond formation and thereby activation of SODs. The protein is Copper chaperone for superoxide dismutase, chloroplastic (CCS) of Oryza sativa subsp. japonica (Rice).